The sequence spans 426 residues: MDNNIQRLIDSAKQSLNSPESYKYIDESFESCIKCTACTAVCPVSRNNPLYPGPKQSGPDGERLRLKSAELYDEALKYCTNCKRCEVACPSDVKIGDLIVRARNNHLAQSKKPLMNKLRDAILSNTDVMGKINTPLAPIVNTITGLKATKFMLEKTLNISKKRTLPKYAFGTFRSWYMKNALQDQQKFERKVAYFHGCYVNYNNPQLGKEFLKVFNAMNIGVMLLEKEKCCGLPLMVNGFPNRARNIAQFNTDYIGKMVDENGIDVISEASSCSLNLRDEYHHILGIDNAKVRPHIHMVTPFLYQLFKEGKTLPLKPLKLRVAYHTACHVDKAGWAPYTLEVLKKIPSLEIIMLPSQCCGIAGTYGFKSENYEISQSIGKNLFDNINEGGFDYVISECQTCKWQIDMSSNVTCIHPLTLLCMSMDA.

4Fe-4S ferredoxin-type domains lie at 21-53 (SYKY…LYPG) and 67-99 (KSAE…GDLI). 8 residues coordinate [4Fe-4S] cluster: Cys-32, Cys-35, Cys-38, Cys-42, Cys-79, Cys-82, Cys-85, and Cys-89.

In terms of assembly, composed of a catalytic GlpA/B dimer and of GlpC.

It is found in the cell inner membrane. The protein operates within polyol metabolism; glycerol degradation via glycerol kinase pathway; glycerone phosphate from sn-glycerol 3-phosphate (anaerobic route): step 1/1. Electron transfer protein; may also function as the membrane anchor for the GlpAB dimer. The sequence is that of Anaerobic glycerol-3-phosphate dehydrogenase subunit C (glpC) from Haemophilus influenzae (strain ATCC 51907 / DSM 11121 / KW20 / Rd).